A 108-amino-acid polypeptide reads, in one-letter code: Large ribosomal subunit protein bL21 (108 aa).

It belongs to the bacterial ribosomal protein bL21 family. In terms of assembly, part of the 50S ribosomal subunit. Contacts protein L20.

In terms of biological role, this protein binds to 23S rRNA in the presence of protein L20. This chain is Large ribosomal subunit protein bL21, found in Acidobacterium capsulatum (strain ATCC 51196 / DSM 11244 / BCRC 80197 / JCM 7670 / NBRC 15755 / NCIMB 13165 / 161).